Here is a 135-residue protein sequence, read N- to C-terminus: Transcriptional activator protein (135 aa).

Positions 17–32 match the Nuclear localization signal motif; the sequence is KIQHHIAKKRQVRRRR. The segment at 37 to 54 is a zinc-finger region; it reads CGCSYYIHLDCINHGFTH. The interval 120–135 is transactivation; it reads HLDDLTVSDWSFFKSL.

Belongs to the geminiviridae transcriptional activator protein family. Monomer. Homodimer. Homooligomer. Self-interaction correlates with nuclear localization and efficient activation of transcription. Monomers suppress local silencing by interacting with and inactivating host adenosine kinase 2 (ADK2) in the cytoplasm. Interacts with and inhibits host SNF1 kinase. Binds to ssDNA. May interact with host RPS27A. In terms of processing, phosphorylated.

The protein localises to the host nucleus. It is found in the host cytoplasm. Its function is as follows. Multifunctional protein that modulates host antiviral defenses and promotes host attractiveness to insect vectors. Acts as a suppressor of RNA-mediated gene silencing, also known as post-transcriptional gene silencing (PTGS), a mechanism of plant viral defense that limits the accumulation of viral RNAs. TrAP suppresses the host RNA silencing by inhibiting adenosine kinase 2 (ADK2), a kinase involved in a general methylation pathway. Also suppresses the host basal defense by interacting with and inhibiting SNF1 kinase, a key regulator of cell metabolism implicated in innate antiviral defense. In terms of biological role, inhibits signal transduction by the phytohormone jasmonate, making the infected plant more attractive to aphids, which are the second host to play a role as a dissemination vector. Acts by binding to ubiquitin precursor RPS27A, thereby preventing ubiquitin degradation of JAZ. This chain is Transcriptional activator protein, found in Capsicum annuum (Capsicum pepper).